We begin with the raw amino-acid sequence, 70 residues long: Sec-independent protein translocase protein TatA (70 aa).

The helical transmembrane segment at 1–21 (MGSFSIWHWLIVLVVVLLIFG) threads the bilayer. The tract at residues 46–70 (DAPKISESDKGGHTIDAEVKDKQNS) is disordered.

The protein belongs to the TatA/E family. The Tat system comprises two distinct complexes: a TatABC complex, containing multiple copies of TatA, TatB and TatC subunits, and a separate TatA complex, containing only TatA subunits. Substrates initially bind to the TatABC complex, which probably triggers association of the separate TatA complex to form the active translocon.

The protein resides in the cell inner membrane. Its function is as follows. Part of the twin-arginine translocation (Tat) system that transports large folded proteins containing a characteristic twin-arginine motif in their signal peptide across membranes. TatA could form the protein-conducting channel of the Tat system. In Thiobacillus denitrificans (strain ATCC 25259 / T1), this protein is Sec-independent protein translocase protein TatA.